Consider the following 337-residue polypeptide: GTPase Obg (337 aa).

Residues 1 to 159 (MKFVDSATIS…FELEMELKLM (159 aa)) form the Obg domain. Residues 160-322 (ADVGLVGFPN…LKDELWRQVS (163 aa)) enclose the OBG-type G domain. Residues 166–173 (GFPNAGKS), 191–195 (FTTLV), 213–216 (DIPG), 280–283 (TKMD), and 303–305 (SSV) contribute to the GTP site. Positions 173 and 193 each coordinate Mg(2+).

The protein belongs to the TRAFAC class OBG-HflX-like GTPase superfamily. OBG GTPase family. Monomer. Mg(2+) is required as a cofactor.

It localises to the cytoplasm. Its function is as follows. An essential GTPase which binds GTP, GDP and possibly (p)ppGpp with moderate affinity, with high nucleotide exchange rates and a fairly low GTP hydrolysis rate. Plays a role in control of the cell cycle, stress response, ribosome biogenesis and in those bacteria that undergo differentiation, in morphogenesis control. The polypeptide is GTPase Obg (Chlorobium phaeobacteroides (strain DSM 266 / SMG 266 / 2430)).